The primary structure comprises 586 residues: Acyl-coenzyme A synthetase ACSM3, mitochondrial (586 aa).

The N-terminal 27 residues, 1 to 27 (MLACVTMKMLRHAKCFQRLAIFGSVRA), are a transit peptide targeting the mitochondrion. N6-succinyllysine is present on residues K73 and K106. N6-acetyllysine is present on K157. ATP is bound by residues 235-243 (TSGTSGYPK), 374-379 (EGYGQT), D461, R476, and K572.

It belongs to the ATP-dependent AMP-binding enzyme family. Requires Mg(2+) as cofactor. Mn(2+) is required as a cofactor.

Its subcellular location is the mitochondrion. It localises to the mitochondrion matrix. The catalysed reaction is a medium-chain fatty acid + ATP + CoA = a medium-chain fatty acyl-CoA + AMP + diphosphate. The enzyme catalyses propanoate + ATP + CoA = propanoyl-CoA + AMP + diphosphate. It catalyses the reaction butanoate + ATP + CoA = butanoyl-CoA + AMP + diphosphate. It carries out the reaction 2-methylpropanoate + ATP + CoA = 2-methylpropanoyl-CoA + AMP + diphosphate. The catalysed reaction is 2-methylbutanoate + ATP + CoA = 2-methylbutanoyl-CoA + AMP + diphosphate. The enzyme catalyses octanoate + ATP + CoA = octanoyl-CoA + AMP + diphosphate. In terms of biological role, catalyzes the activation of fatty acids by CoA to produce an acyl-CoA, the first step in fatty acid metabolism. Capable of activating medium-chain fatty acids with a preference for isobutyrate among fatty acids with 2-6 carbon atoms. The sequence is that of Acyl-coenzyme A synthetase ACSM3, mitochondrial (ACSM3) from Pongo abelii (Sumatran orangutan).